Here is a 391-residue protein sequence, read N- to C-terminus: PPE family protein PPE15 (391 aa).

Residues 312-367 (LGEATLVGRLSVPAAWSTAAPATTAGATALEGSGWTVAAEEAGPVTGMMPGMASAA) are eukaryotic-like SH3 domain.

This sequence belongs to the mycobacterial PPE family. As to quaternary structure, forms a heterodimer with PE8. The dimer forms a 1:1:1 heterotrimeric complex with EspG5. PPE15 interacts directly with EspG5. Interacts via the C-terminal region with host Toll-like receptor 4 (TLR4). Interacts, also via the C-terminal region, with two cytosolic subunits of the host NOX complex, p47phox (NCF1) and p67phox (NCF2).

Its subcellular location is the secreted. The protein resides in the host mitochondrion. Its function is as follows. May play a critical role in the homeostasis of triacylglycerol-containing lipid droplets in M.tuberculosis and influence the entry of the pathogen into a dormant state. Is recognized by host TLR4 receptor at the macrophage cell surface, which modulates the host immune response, induces mitochondrial stress and perturbations, and induces macrophage apoptosis leading to pathogen persistence. Also downregulates NOX-mediated reactive oxygen species (ROS) generation in THP1 macrophages, which increases intracellular survival of bacteria. PPE15 interacts with two subunits of the host NADPH oxidase (NOX) complex in the cytosol of macrophages and prevents their migration to the membrane, which inhibits the assembly of the NOX complex at the plasma membrane of THP1 macrophages. This leads to reduced NOX activity and diminished ROS generation. The sequence is that of PPE family protein PPE15 (PPE15) from Mycobacterium tuberculosis (strain CDC 1551 / Oshkosh).